Here is a 322-residue protein sequence, read N- to C-terminus: Peroxidase 66 (322 aa).

The first 24 residues, 1–24 (MAFSKGLIFAMIFAVLAIVKPSEA), serve as a signal peptide directing secretion. Disulfide bonds link cysteine 35–cysteine 114 and cysteine 68–cysteine 73. The Proton acceptor role is filled by histidine 66. Ca(2+)-binding residues include aspartate 67, glycine 72, aspartate 74, and serine 76. The N-linked (GlcNAc...) asparagine glycan is linked to asparagine 155. Proline 161 contributes to the substrate binding site. N-linked (GlcNAc...) asparagine glycosylation is present at asparagine 166. Residue histidine 191 participates in heme b binding. Threonine 192 provides a ligand contact to Ca(2+). A disulfide bridge connects residues cysteine 198 and cysteine 230. A glycan (N-linked (GlcNAc...) asparagine) is linked at asparagine 207. Ca(2+) is bound by residues aspartate 245, threonine 247, and aspartate 252.

It belongs to the peroxidase family. Classical plant (class III) peroxidase subfamily. The cofactor is heme b. Ca(2+) is required as a cofactor.

Its subcellular location is the secreted. It carries out the reaction 2 a phenolic donor + H2O2 = 2 a phenolic radical donor + 2 H2O. Its function is as follows. Removal of H(2)O(2), oxidation of toxic reductants, biosynthesis and degradation of lignin, suberization, auxin catabolism, response to environmental stresses such as wounding, pathogen attack and oxidative stress. These functions might be dependent on each isozyme/isoform in each plant tissue. The sequence is that of Peroxidase 66 (PER66) from Arabidopsis thaliana (Mouse-ear cress).